Reading from the N-terminus, the 180-residue chain is CASP-like protein XL3 (180 aa).

Over 1–7 (MELSIQK) the chain is Cytoplasmic. Residues 8–28 (IEALIRLSTIVMLVLTACLIG) form a helical membrane-spanning segment. Topologically, residues 29 to 49 (LDSQTKVIFYVQKKASFKDLR) are extracellular. Residues 50 to 70 (ALVGLLYITSLAAAYNLLQLC) form a helical membrane-spanning segment. Residues 71–98 (CSSFSASYKGTSLQSYAYLAWLRYILDQ) are Cytoplasmic-facing. A helical membrane pass occupies residues 99–119 (AVVYAVFAGNLAALEHSFLVL). Topologically, residues 120–140 (TGEENFQWLKWCNKYTRFCTQ) are extracellular. Residues 141 to 161 (IGGSLLCGFVASLLMFSIASI) traverse the membrane as a helical segment. Residues 162–180 (SAFNLFRQYSPTKFMHLKL) lie on the Cytoplasmic side of the membrane.

The protein belongs to the Casparian strip membrane proteins (CASP) family. In terms of assembly, homodimer and heterodimers.

The protein resides in the cell membrane. This is CASP-like protein XL3 (XL3) from Gossypium hirsutum (Upland cotton).